A 287-amino-acid chain; its full sequence is MSDTSDLVDGKWQRLPPVPEGMSKSQWKKQWRRQMYEAKKEEYAEVRKEKRKRAKENRRKKIQEYIDRGEEVPAELKREPRVNRDQVASGINIILDCAFDDLMNDKEIVSTSNQITRAYSANRRASQYANITVTSFNKRLKERFDKALDDCNYPQWQNFKFVSDEKLITEGDKSKMVYLTADTEEQLDTLEPGMTYIVGGIVDKNRHKLLCYNKAKELGIPTRRLPIGEYIKIEGRKVLTTTHVIQLMLKYCESRDWKESFESVIPSRKLDPVKEKEQQQQQQQQQQ.

Residues 1-27 form a disordered region; the sequence is MSDTSDLVDGKWQRLPPVPEGMSKSQW. The 194-residue stretch at 79–272 folds into the SAM-dependent MTase TRM10-type domain; the sequence is EPRVNRDQVA…SVIPSRKLDP (194 aa). S-adenosyl-L-methionine is bound by residues 179–180, G199, 203–207, C211, L225, and 237–239; these read LT, DKNRH, and KVL. The Proton acceptor role is filled by D203. The segment covering 268–278 has biased composition (basic and acidic residues); the sequence is RKLDPVKEKEQ. The segment at 268 to 287 is disordered; it reads RKLDPVKEKEQQQQQQQQQQ.

It belongs to the class IV-like SAM-binding methyltransferase superfamily. TRM10 family. As to quaternary structure, monomer.

It is found in the cytoplasm. The protein resides in the nucleus. The catalysed reaction is guanosine(9) in tRNA + S-adenosyl-L-methionine = N(1)-methylguanosine(9) in tRNA + S-adenosyl-L-homocysteine + H(+). Its function is as follows. S-adenosyl-L-methionine-dependent guanine N(1)-methyltransferase that catalyzes the formation of N(1)-methylguanine at position 9 (m1G9) in cytoplasmic tRNA. The sequence is that of tRNA (guanine(9)-N1)-methyltransferase from Candida glabrata (strain ATCC 2001 / BCRC 20586 / JCM 3761 / NBRC 0622 / NRRL Y-65 / CBS 138) (Yeast).